The following is a 96-amino-acid chain: NADH-ubiquinone oxidoreductase chain 4L (96 aa).

The next 3 membrane-spanning stretches (helical) occupy residues 2–22 (IMFL…FCFV), 28–48 (LLSM…MLFI), and 62–82 (MFLT…VSMI).

Belongs to the complex I subunit 4L family.

It localises to the mitochondrion membrane. The enzyme catalyses a ubiquinone + NADH + 5 H(+)(in) = a ubiquinol + NAD(+) + 4 H(+)(out). Functionally, core subunit of the mitochondrial membrane respiratory chain NADH dehydrogenase (Complex I) that is believed to belong to the minimal assembly required for catalysis. Complex I functions in the transfer of electrons from NADH to the respiratory chain. The immediate electron acceptor for the enzyme is believed to be ubiquinone. In Drosophila nasuta F (Fruit fly), this protein is NADH-ubiquinone oxidoreductase chain 4L (mt:ND4L).